We begin with the raw amino-acid sequence, 266 residues long: Protein crossbronx-like (266 aa).

The 164-residue stretch at 15–178 (KQGYHILAEY…VQEQAIASRN (164 aa)) folds into the UBC core domain.

The protein belongs to the ubiquitin-conjugating enzyme family. FTS subfamily.

This Drosophila erecta (Fruit fly) protein is Protein crossbronx-like.